The sequence spans 547 residues: bZIP transcription factor 29 (547 aa).

Disordered regions lie at residues 1–199 (MGDT…SGGE), 244–312 (NSSE…DIAP), and 333–356 (GDES…TNSV). Residues 15–52 (LHSSFGTTSSSIPKNPISQLDLNPNFIRSSAPQFSKPF) show a composition bias toward polar residues. Pro residues predominate over residues 63-73 (PSHPNLIPPTS). Polar residues predominate over residues 74–89 (PFSQIPTTRQPGSHNF). Residues 120–132 (FRDHDVSMEDRDS) show a composition bias toward basic and acidic residues. Residues 134–157 (VFNSNHSLPPSPFTRCNSTSSSSL) show a composition bias toward polar residues. Positions 249 to 263 (DDSKNGNENRDDMES) are enriched in basic and acidic residues. A compositionally biased stretch (polar residues) spans 264 to 275 (SRASGTKTNGSD). Positions 279 to 294 (ESSSVNESANNNMNSS) are enriched in low complexity. Over residues 344–356 (GSMSRKVSPTNSV) the composition is skewed to polar residues. Residues 394–457 (DPKRVKRILA…MGLTNQNNEL (64 aa)) form the bZIP domain. Residues 396–417 (KRVKRILANRQSAARSKERKMR) are basic motif. Residues 416-469 (MRYIVELEHKVQTLQTEATTLSAQLTLLQRDMMGLTNQNNELKFRLQAMEQQAR) adopt a coiled-coil conformation. Residues 422 to 457 (LEHKVQTLQTEATTLSAQLTLLQRDMMGLTNQNNEL) form a leucine-zipper region. The span at 517–535 (QLRQQPQQMQQQSHQQNHQ) shows a compositional bias: low complexity. The disordered stretch occupies residues 517-547 (QLRQQPQQMQQQSHQQNHQNGTMATKSESNE). Residues 536 to 547 (NGTMATKSESNE) show a composition bias toward polar residues.

In terms of assembly, forms homodimers. In terms of tissue distribution, expressed in roots, leaves and flowers. Expressed in the root tips, lateral root primordia, and guard cells of leaves, hypocotyls and anthers.

It is found in the cytoplasm. Its subcellular location is the nucleus. Its function is as follows. Transcription factor that acts as a repressor of reproductive development, meristem size and plant growth. Regulates meristem size, cell size and cell number during plant development. Binds to the promoters of the cell cycle regulators CYCB1-2 and SMR4, and genes involved in cell wall organization, such as XTH9, EXPA1 and EXPA3. Possesses transactivation activity in yeast. Possesses transactivation activity in plant protoplasts. Plays a role in abiotic stress response by binding to the 5'-CAGCTG-3' DNA sequence found in the promoters of MYB44 and TRX8. Plays a role in osmosensory response by binding to the 5'-AGCTGT/G-3' DNA sequence found in the promoters of the hypoosmolarity-responsive genes CYP707A1 and CYP707A3. Binds to the 5'-AGCTGT-3' DNA sequence found in the promoter of the ZAT1 gene in response to abiotic stresses, such as oxidative stress, high-light, osmotic shock, salt and heat stresses. This Arabidopsis thaliana (Mouse-ear cress) protein is bZIP transcription factor 29.